The sequence spans 129 residues: uncharacterized protein (129 aa).

The signal sequence occupies residues 1-17 (MCPECFFLMLFFCGYRA). A compositionally biased stretch (low complexity) spans 26–36 (SSSSSSSFRSS). The tract at residues 26–76 (SSSSSSSFRSSPAYGFSGRPPGGAGCRERSQRSCLRPGGLPSLTRNPGLQR) is disordered.

This is an uncharacterized protein from Escherichia coli O157:H7.